A 293-amino-acid chain; its full sequence is 4-hydroxy-tetrahydrodipicolinate synthase (293 aa).

T47 lines the pyruvate pocket. Residue Y136 is the Proton donor/acceptor of the active site. K164 serves as the catalytic Schiff-base intermediate with substrate. I206 contacts pyruvate.

This sequence belongs to the DapA family. Homotetramer; dimer of dimers.

It is found in the cytoplasm. The enzyme catalyses L-aspartate 4-semialdehyde + pyruvate = (2S,4S)-4-hydroxy-2,3,4,5-tetrahydrodipicolinate + H2O + H(+). It functions in the pathway amino-acid biosynthesis; L-lysine biosynthesis via DAP pathway; (S)-tetrahydrodipicolinate from L-aspartate: step 3/4. Its function is as follows. Catalyzes the condensation of (S)-aspartate-beta-semialdehyde [(S)-ASA] and pyruvate to 4-hydroxy-tetrahydrodipicolinate (HTPA). The protein is 4-hydroxy-tetrahydrodipicolinate synthase of Listeria innocua serovar 6a (strain ATCC BAA-680 / CLIP 11262).